The primary structure comprises 296 residues: Ribosomal RNA small subunit methyltransferase A (296 aa).

Residues N31, L33, G58, E79, D111, and N136 each contribute to the S-adenosyl-L-methionine site.

The protein belongs to the class I-like SAM-binding methyltransferase superfamily. rRNA adenine N(6)-methyltransferase family. RsmA subfamily.

Its subcellular location is the cytoplasm. The enzyme catalyses adenosine(1518)/adenosine(1519) in 16S rRNA + 4 S-adenosyl-L-methionine = N(6)-dimethyladenosine(1518)/N(6)-dimethyladenosine(1519) in 16S rRNA + 4 S-adenosyl-L-homocysteine + 4 H(+). Functionally, specifically dimethylates two adjacent adenosines (A1518 and A1519) in the loop of a conserved hairpin near the 3'-end of 16S rRNA in the 30S particle. May play a critical role in biogenesis of 30S subunits. The chain is Ribosomal RNA small subunit methyltransferase A from Lactobacillus johnsonii (strain CNCM I-12250 / La1 / NCC 533).